The primary structure comprises 350 residues: tRNA uridine(34) hydroxylase (350 aa).

Residues 146–240 enclose the Rhodanese domain; that stretch reads DDPDALFIDM…YARKAREQGL (95 aa). C200 (cysteine persulfide intermediate) is an active-site residue.

It belongs to the TrhO family.

It catalyses the reaction uridine(34) in tRNA + AH2 + O2 = 5-hydroxyuridine(34) in tRNA + A + H2O. Functionally, catalyzes oxygen-dependent 5-hydroxyuridine (ho5U) modification at position 34 in tRNAs. The chain is tRNA uridine(34) hydroxylase from Shigella sonnei (strain Ss046).